Reading from the N-terminus, the 330-residue chain is D-lactate dehydrogenase (330 aa).

NAD(+) contacts are provided by residues 155 to 156 (RI), Asp175, 206 to 207 (MP), Asn212, 233 to 235 (MAR), and Asp259. The active site involves Arg235. The active site involves Glu264. Residue His296 is the Proton donor of the active site.

This sequence belongs to the D-isomer specific 2-hydroxyacid dehydrogenase family.

The enzyme catalyses (R)-lactate + NAD(+) = pyruvate + NADH + H(+). The sequence is that of D-lactate dehydrogenase (ldhD) from Streptococcus pyogenes serotype M1.